The chain runs to 465 residues: GTPase Der (465 aa).

2 EngA-type G domains span residues 3-167 (PLVA…PERG) and 179-352 (IHIA…VSAL). GTP is bound by residues 9–16 (GRPNVGKS), 57–61 (DTGGM), 119–122 (NKID), 185–192 (GRPNVGKS), 232–236 (DTAGL), and 297–300 (NKWD). The 85-residue stretch at 353-437 (RQFSTSEVNK…PVRFLFREGD (85 aa)) folds into the KH-like domain.

Belongs to the TRAFAC class TrmE-Era-EngA-EngB-Septin-like GTPase superfamily. EngA (Der) GTPase family. As to quaternary structure, associates with the 50S ribosomal subunit.

Its function is as follows. GTPase that plays an essential role in the late steps of ribosome biogenesis. This Xylella fastidiosa (strain 9a5c) protein is GTPase Der.